The primary structure comprises 143 residues: Methylglyoxal synthase (143 aa).

Positions 1 to 143 constitute an MGS-like domain; sequence MTVKKIALVA…DYEAYRNRII (143 aa). Residues His11, Lys15, 37 to 40, and 57 to 58 each bind substrate; these read TGST and SG. Asp63 (proton donor/acceptor) is an active-site residue. Position 90 (His90) interacts with substrate.

Belongs to the methylglyoxal synthase family.

It catalyses the reaction dihydroxyacetone phosphate = methylglyoxal + phosphate. In terms of biological role, catalyzes the formation of methylglyoxal from dihydroxyacetone phosphate. This chain is Methylglyoxal synthase, found in Coxiella burnetii (strain Dugway 5J108-111).